Here is a 607-residue protein sequence, read N- to C-terminus: Large ribosomal subunit assembly factor BipA (607 aa).

In terms of domain architecture, tr-type G spans 3 to 198; the sequence is ENLRNIAIIA…AIVDHVPAPD (196 aa). Residues 15–20 and 128–131 each bind GTP; these read DHGKTT and NKVD. Residues 481–607 are C-terminal domain (CTD), required but not sufficient to bind 70S or 30S ribosomes; the sequence is GQRQNGVLIS…RRANRGQKEE (127 aa).

It belongs to the TRAFAC class translation factor GTPase superfamily. Classic translation factor GTPase family. BipA subfamily. As to quaternary structure, monomer.

It localises to the cytoplasm. The enzyme catalyses GTP + H2O = GDP + phosphate + H(+). Its activity is regulated as follows. Ribosome-associated GTPase is not affected by low levels of ppGpp, &gt;40 uM ppGpp and &gt;50 uM GDP inhibit GTPase. The C-terminus (residues 387-607 or 481-607) inhibits GTPase activity, in its absence kcat increases, but GTPase is no longer stimulated by 70S ribosome or 30S or 50S subunits. Its function is as follows. A 50S ribosomal subunit assembly protein with GTPase activity, required for 50S subunit assembly at low temperatures, may also play a role in translation. Binds GTP and analogs. Binds the 70S ribosome between the 30S and 50S subunits, in a similar position as ribosome-bound EF-G; it contacts a number of ribosomal proteins, both rRNAs and the A-site tRNA. A ribosome-stimulated GTPase, GTPase activity increases 4 fold in the presence of 70S ribosomes. Binds 70S ribosomes in the presence of GTP or its non-hydrolyzable analog GMPPNP; in the presence of ppGpp or under stress conditions it binds to 30S ribosomal subunits. The sequence is that of Large ribosomal subunit assembly factor BipA from Salmonella typhimurium (strain LT2 / SGSC1412 / ATCC 700720).